Consider the following 512-residue polypeptide: Cytochrome P450 monooxygenase ABA1 (512 aa).

A helical membrane pass occupies residues 13–32 (HWLSGILAIATVYLATSYII). Position 458 (C458) interacts with heme.

Belongs to the cytochrome P450 family. Requires heme as cofactor.

It is found in the membrane. The protein operates within hormone biosynthesis. Cytochrome P450 monooxygenase involved in the biosynthesis of abscisic acid (ABA), a phytohormone that acts antagonistically toward salicylic acid (SA), jasmonic acid (JA) and ethylene (ETH) signaling, to impede plant defense responses. During pathogen-host interaction, ABA plays a dual role in disease severity by increasing plant susceptibility and accelerating pathogenesis in the fungus itself. The first step of the pathway catalyzes the reaction from farnesyl diphosphate to alpha-ionylideneethane performed by the alpha-ionylideneethane synthase ABA3 via a three-step reaction mechanism involving 2 neutral intermediates, beta-farnesene and allofarnesene. The cytochrome P450 monooxygenase ABA1 might then be involved in the conversion of alpha-ionylideneethane to alpha-ionylideneacetic acid. Alpha-ionylideneacetic acid is further converted to abscisic acid in 2 steps involving the cytochrome P450 monooxygenase ABA2 and the short-chain dehydrogenase/reductase ABA4, via the intermediates 1'-deoxy-ABA or 1',4'-trans-diol-ABA, depending on the order of action of these 2 enzymes. ABA2 is responsible for the hydroxylation of carbon atom C-1' and ABA4 might be involved in the oxidation of the C-4' carbon atom. This is Cytochrome P450 monooxygenase ABA1 from Pyricularia oryzae (strain Y34) (Rice blast fungus).